A 364-amino-acid chain; its full sequence is RNA-binding protein ZC3H11 (364 aa).

The segment at 64-92 (RYKTKLCKNFVQYGTCPYDIRCMFAHGEE) adopts a C3H1-type zinc-finger fold. The MKT1-binding motif signature appears at 194 to 199 (VRHNPY). The interval 340–364 (EQSQSHLKREGNEGRGEGLHMFLSL) is disordered. The segment covering 346-357 (LKREGNEGRGEG) has biased composition (basic and acidic residues).

Interacts (via MKT1-binding motif) with MKT1. Interacts with PBP1 (via C-terminus); the interaction is direct. In terms of processing, phosphorylated at the N-terminus. CK1.2-dependent phosphorylation may lead to proteasome-dependent degradation of ZC3H11 in absence of stress.

The protein localises to the cytoplasm. RNA-binding protein involved in regulation of mRNA stability. Binds AU-rich regions in the 3'-UTR of mRNAs and promotes their stabilization by recruiting a MKT1-containing complex. Stabilizes chaperone mRNAs during stress that causes an accumulation of misfolded or unfolded proteins in the cytoplasm. The polypeptide is RNA-binding protein ZC3H11 (Trypanosoma brucei brucei (strain 927/4 GUTat10.1)).